The chain runs to 834 residues: Ras GTPase-activating protein 3 (834 aa).

2 C2 domains span residues 1–112 (MAVE…DTWF) and 123–263 (VQGK…EAWY). An N-acetylalanine modification is found at Ala2. Tyr66 is subject to Phosphotyrosine. Residue Ser77 is modified to Phosphoserine. Phosphothreonine is present on Thr110. The Ras-GAP domain occupies 346–561 (GRVVPFISAI…DAVKNFLDLI (216 aa)). The 102-residue stretch at 576–677 (ILLKEGFMIK…WIDILTKVSQ (102 aa)) folds into the PH domain. Residues 679–715 (NQKRLTVFHPSAYLNGHWLCCRASSDTAIGCTPCTGG) form a Btk-type zinc finger. 4 residues coordinate Zn(2+): His687, Cys698, Cys699, and Cys709. Phosphoserine is present on residues Ser809 and Ser833.

Functionally, inhibitory regulator of the Ras-cyclic AMP pathway. Binds inositol tetrakisphosphate (IP4). The polypeptide is Ras GTPase-activating protein 3 (Rasa3) (Rattus norvegicus (Rat)).